We begin with the raw amino-acid sequence, 85 residues long: Large ribosomal subunit protein bL27 (85 aa).

The segment at 1-20 (MAHKKAGGSSRNGRDSEAKR) is disordered.

This sequence belongs to the bacterial ribosomal protein bL27 family.

This is Large ribosomal subunit protein bL27 from Aeromonas salmonicida (strain A449).